The following is a 499-amino-acid chain: Aspartyl/glutamyl-tRNA(Asn/Gln) amidotransferase subunit B (499 aa).

It belongs to the GatB/GatE family. GatB subfamily. In terms of assembly, heterotrimer of A, B and C subunits.

The catalysed reaction is L-glutamyl-tRNA(Gln) + L-glutamine + ATP + H2O = L-glutaminyl-tRNA(Gln) + L-glutamate + ADP + phosphate + H(+). It carries out the reaction L-aspartyl-tRNA(Asn) + L-glutamine + ATP + H2O = L-asparaginyl-tRNA(Asn) + L-glutamate + ADP + phosphate + 2 H(+). In terms of biological role, allows the formation of correctly charged Asn-tRNA(Asn) or Gln-tRNA(Gln) through the transamidation of misacylated Asp-tRNA(Asn) or Glu-tRNA(Gln) in organisms which lack either or both of asparaginyl-tRNA or glutaminyl-tRNA synthetases. The reaction takes place in the presence of glutamine and ATP through an activated phospho-Asp-tRNA(Asn) or phospho-Glu-tRNA(Gln). This is Aspartyl/glutamyl-tRNA(Asn/Gln) amidotransferase subunit B from Bartonella tribocorum (strain CIP 105476 / IBS 506).